A 346-amino-acid polypeptide reads, in one-letter code: Dihydroorotase (346 aa).

Zn(2+)-binding residues include His-14 and His-16. Residues 16-18 (HLR) and Asn-42 contribute to the substrate site. Lys-100, His-137, and His-175 together coordinate Zn(2+). Lys-100 bears the N6-carboxylysine mark. His-137 is a binding site for substrate. Leu-220 provides a ligand contact to substrate. A Zn(2+)-binding site is contributed by Asp-248. The active site involves Asp-248. Residues His-252 and Ala-264 each contribute to the substrate site.

The protein belongs to the metallo-dependent hydrolases superfamily. DHOase family. Class II DHOase subfamily. In terms of assembly, homodimer. Requires Zn(2+) as cofactor.

It catalyses the reaction (S)-dihydroorotate + H2O = N-carbamoyl-L-aspartate + H(+). Its pathway is pyrimidine metabolism; UMP biosynthesis via de novo pathway; (S)-dihydroorotate from bicarbonate: step 3/3. Functionally, catalyzes the reversible cyclization of carbamoyl aspartate to dihydroorotate. The protein is Dihydroorotase of Cereibacter sphaeroides (strain ATCC 17025 / ATH 2.4.3) (Rhodobacter sphaeroides).